A 554-amino-acid chain; its full sequence is Hydroxylamine reductase (554 aa).

Residues Cys3, Cys6, Cys18, and Cys25 each coordinate [2Fe-2S] cluster. Residues His252, Glu276, Cys320, Cys408, Cys436, Cys461, Glu495, and Lys497 each coordinate hybrid [4Fe-2O-2S] cluster. Residue Cys408 is modified to Cysteine persulfide.

Belongs to the HCP family. [2Fe-2S] cluster is required as a cofactor. Requires hybrid [4Fe-2O-2S] cluster as cofactor.

It is found in the cytoplasm. The enzyme catalyses A + NH4(+) + H2O = hydroxylamine + AH2 + H(+). Catalyzes the reduction of hydroxylamine to form NH(3) and H(2)O. This Shewanella sp. (strain MR-4) protein is Hydroxylamine reductase.